Here is a 567-residue protein sequence, read N- to C-terminus: Type 2 DNA topoisomerase 6 subunit B (567 aa).

Residues Asn46, Asp78, Thr99–Lys100, Gly109–Ser116, and Lys472 contribute to the ATP site.

This sequence belongs to the TOP6B family. In terms of assembly, homodimer. Heterotetramer of two Top6A and two Top6B chains.

The enzyme catalyses ATP-dependent breakage, passage and rejoining of double-stranded DNA.. Its function is as follows. Relaxes both positive and negative superturns and exhibits a strong decatenase activity. This Thermococcus kodakarensis (strain ATCC BAA-918 / JCM 12380 / KOD1) (Pyrococcus kodakaraensis (strain KOD1)) protein is Type 2 DNA topoisomerase 6 subunit B.